We begin with the raw amino-acid sequence, 655 residues long: FYVE, RhoGEF and PH domain-containing protein 2 (655 aa).

2 positions are modified to phosphoserine: serine 11 and serine 48. The interval 18 to 64 (VFENSRTPEAAPRGQRLEDVHHRPECRPPESPGPREKTNVGEAVGSE) is disordered. Basic and acidic residues predominate over residues 32–56 (QRLEDVHHRPECRPPESPGPREKTN). Residues 102–290 (PEKKIVQELL…FSAAQHSNAA (189 aa)) enclose the DH domain. The region spanning 319–418 (TLLREGPVLK…WMQAFQAAID (100 aa)) is the PH 1 domain. The FYVE-type zinc-finger motif lies at 458-518 (DKMVTMCMRC…VCLHCYAFLT (61 aa)). Cysteine 464, cysteine 467, cysteine 481, cysteine 484, cysteine 489, cysteine 492, cysteine 510, and cysteine 513 together coordinate Zn(2+). The region spanning 544 to 641 (QSLMCSFLQL…WVKAMERAAS (98 aa)) is the PH 2 domain. Serine 654 carries the phosphoserine modification.

It localises to the cytoplasm. Its subcellular location is the cytoskeleton. The protein localises to the nucleus. The protein resides in the early endosome. It is found in the early endosome membrane. It localises to the cell projection. Its subcellular location is the ruffle membrane. In terms of biological role, activates CDC42, a member of the Ras-like family of Rho- and Rac proteins, by exchanging bound GDP for free GTP. Activates JNK1 via CDC42 but not RAC1. Binds to phosphatidylinositol 4,5-bisphosphate, phosphatidylinositol 3,4,5-trisphosphate, phosphatidylinositol 5-monophosphate, phosphatidylinositol 4-monophosphate and phosphatidylinositol 3-monophosphate. This Homo sapiens (Human) protein is FYVE, RhoGEF and PH domain-containing protein 2 (FGD2).